The primary structure comprises 807 residues: MDQREILQKFLDEAQSKKITKEEFANEFLKLKRQSTKYKADKTYPTTVAEKPKNIKKNRYKDILPYDYSRVELSLITSDEDSSYINANFIKGVYGPKAYIATQGPLSTTLLDFWRMIWEYSVLIIVMACMEYEMGKKKCERYWAEPGEMQLEFGPFSVSCEAEKRKSDYIIRTLKVKFNSETRTIYQFHYKNWPDHDVPSSIDPILELIWDVRCYQEDDSVPICIHCSAGCGRTGVICAIDYTWMLLKDGIIPENFSVFSLIREMRTQRPSLVQTQEQYELVYNAVLELFKRQMDVIRDKHSGTESQAKHCIPEKNHTLQADSYSPNLPKSTTKAAKMMNQQRTKMEIKESSSFDFRTSEISAKEELVLHPAKSSTSFDFLELNYSFDKNADTTMKWQTKAFPIVGEPLQKHQSLDLGSLLFEGCSNSKPVNAAGRYFNSKVPITRTKSTPFELIQQRETKEVDSKENFSYLESQPHDSCFVEMQAQKVMHVSSAELNYSLPYDSKHQIRNASNVKHHDSSALGVYSYIPLVENPYFSSWPPSGTSSKMSLDLPEKQDGTVFPSSLLPTSSTSLFSYYNSHDSLSLNSPTNISSLLNQESAVLATAPRIDDEIPPPLPVRTPESFIVVEEAGEFSPNVPKSLSSAVKVKIGTSLEWGGTSEPKKFDDSVILRPSKSVKLRSPKSELHQDRSSPPPPLPERTLESFFLADEDCMQAQSIETYSTSYPDTMENSTSSKQTLKTPGKSFTRSKSLKILRNMKKSICNSCPPNKPAESVQSNNSSSFLNFGFANRFSKPKGPRNPPPTWNI.

In terms of domain architecture, Tyrosine-protein phosphatase spans 24 to 289 (FANEFLKLKR…ELVYNAVLEL (266 aa)). S35 bears the Phosphoserine; by PKC/PRKCD mark. C129 and C227 form a disulfide bridge. C227 (phosphocysteine intermediate) is an active-site residue. Residues 227–233 (CSAGCGR) and Q274 each bind substrate. A phosphoserine mark is found at S449, S635, S684, and S692. Disordered stretches follow at residues 676–700 (SVKL…LPER) and 724–746 (SYPD…GKSF).

It belongs to the protein-tyrosine phosphatase family. Non-receptor class 4 subfamily. Interacts with CSK. Interacts with LPXN. Interacts with CBL. Interacts with TRAF3 (via MATH domain); the interaction promotes TRAF3 polyubiquitination. Phosphorylation on Ser-35 by PKC/PRKCD abrogates its ability to dephosphorylate and inactivate the SRC family kinases. In terms of tissue distribution, expressed in bone marrow, B and T-cells, PBMCs, natural killer cells, monocytes, dendritic cells and neutrophils. Both isoform 1 and 4 are predominantly expressed in lymphoid tissues and cells. Isoform 1 is expressed in thymocytes and both mature B and T-cells.

It is found in the cytoplasm. It carries out the reaction O-phospho-L-tyrosyl-[protein] + H2O = L-tyrosyl-[protein] + phosphate. It catalyses the reaction N-(5Z,8Z,11Z,14Z-eicosatetraenoyl)-ethanolamine phosphate + H2O = N-(5Z,8Z,11Z,14Z-eicosatetraenoyl)-ethanolamine + phosphate. With respect to regulation, down-regulated by phosphorylation. Its function is as follows. Acts as a negative regulator of T-cell receptor (TCR) signaling by direct dephosphorylation of the Src family kinases LCK and FYN, ITAMs of the TCRz/CD3 complex, as well as ZAP70, VAV, VCP and other key signaling molecules. Associates with and probably dephosphorylates CBL. Dephosphorylates LCK at its activating 'Tyr-394' residue. Dephosphorylates ZAP70 at its activating 'Tyr-493' residue. Dephosphorylates the immune system activator SKAP2. Positively regulates toll-like receptor (TLR)-induced type 1 interferon production. Promotes host antiviral responses mediated by type 1 interferon. Regulates NOD2-induced pro-inflammatory cytokine secretion and autophagy. Acts as an activator of NLRP3 inflammasome assembly by mediating dephosphorylation of 'Tyr-861' of NLRP3. Dephosphorylates phospho-anandamide (p-AEA), an endocannabinoid to anandamide (also called N-arachidonoylethanolamide). In Homo sapiens (Human), this protein is Tyrosine-protein phosphatase non-receptor type 22 (PTPN22).